The following is a 398-amino-acid chain: Acetate kinase (398 aa).

Position 10 (N10) interacts with Mg(2+). Position 17 (K17) interacts with ATP. A substrate-binding site is contributed by R91. The Proton donor/acceptor role is filled by D148. ATP contacts are provided by residues 208–212, 283–285, and 331–335; these read HLGNG, DCR, and GIGEN. Residue E385 participates in Mg(2+) binding.

The protein belongs to the acetokinase family. As to quaternary structure, homodimer. The cofactor is Mg(2+). It depends on Mn(2+) as a cofactor.

Its subcellular location is the cytoplasm. The catalysed reaction is acetate + ATP = acetyl phosphate + ADP. It participates in metabolic intermediate biosynthesis; acetyl-CoA biosynthesis; acetyl-CoA from acetate: step 1/2. Functionally, catalyzes the formation of acetyl phosphate from acetate and ATP. Can also catalyze the reverse reaction. The chain is Acetate kinase from Shewanella loihica (strain ATCC BAA-1088 / PV-4).